A 93-amino-acid polypeptide reads, in one-letter code: Small ribosomal subunit protein uS15 (93 aa).

Belongs to the universal ribosomal protein uS15 family. In terms of assembly, part of the 30S ribosomal subunit. Forms a bridge to the 50S subunit in the 70S ribosome, contacting the 23S rRNA.

In terms of biological role, one of the primary rRNA binding proteins, it binds directly to 16S rRNA where it helps nucleate assembly of the platform of the 30S subunit by binding and bridging several RNA helices of the 16S rRNA. Functionally, forms an intersubunit bridge (bridge B4) with the 23S rRNA of the 50S subunit in the ribosome. This Ehrlichia ruminantium (strain Gardel) protein is Small ribosomal subunit protein uS15.